The following is a 434-amino-acid chain: MEHLDLGPFSRASGTVRLPGSKSISNRVLLLAALAEGETTITNLLDSDDTRVMLDALEKLGVKFKRDGDTCVVTGTRGALPAARADLFLGNAGTAVRPLTAALAVNGGDYRIHGVPRMHERPIGDLVDGLRQIGAKIDYEENEGFPPLRIRPAQISVDAPIRVRGDVSSQFLTALLMTLPLVKTESGETIVEVSGELISKPYIEITIRLMERFGIKVERFGWERFTIPSGVRYQSPGKIMVEGDASSASYFLAAGALGGGPLRVEGVGRASIQGDVGFATALMKMGANVTMGDDWIEVRGVGNDHGKLDPIDMDFNLIPDAAMTIAVAALFADGTTTLRNIGSWRVKETDRIAAMATELSKVGAKVQAGEDFLVVTPPEQLTPNAAIDTYDDHRMAMCFSLVSLGGVPVRINDPKCVGKTFPDYFERFLALTQP.

Residues lysine 22, serine 23, and arginine 27 each coordinate 3-phosphoshikimate. Residue lysine 22 participates in phosphoenolpyruvate binding. The phosphoenolpyruvate site is built by glycine 93 and arginine 121. 6 residues coordinate 3-phosphoshikimate: serine 168, serine 169, glutamine 170, serine 199, aspartate 320, and lysine 347. Glutamine 170 contributes to the phosphoenolpyruvate binding site. Catalysis depends on aspartate 320, which acts as the Proton acceptor. Positions 351, 394, and 419 each coordinate phosphoenolpyruvate.

The protein belongs to the EPSP synthase family. In terms of assembly, monomer.

Its subcellular location is the cytoplasm. The enzyme catalyses 3-phosphoshikimate + phosphoenolpyruvate = 5-O-(1-carboxyvinyl)-3-phosphoshikimate + phosphate. It functions in the pathway metabolic intermediate biosynthesis; chorismate biosynthesis; chorismate from D-erythrose 4-phosphate and phosphoenolpyruvate: step 6/7. Catalyzes the transfer of the enolpyruvyl moiety of phosphoenolpyruvate (PEP) to the 5-hydroxyl of shikimate-3-phosphate (S3P) to produce enolpyruvyl shikimate-3-phosphate and inorganic phosphate. In Paraburkholderia phymatum (strain DSM 17167 / CIP 108236 / LMG 21445 / STM815) (Burkholderia phymatum), this protein is 3-phosphoshikimate 1-carboxyvinyltransferase.